The following is a 148-amino-acid chain: Large ribosomal subunit protein bL9 (148 aa).

This sequence belongs to the bacterial ribosomal protein bL9 family.

Functionally, binds to the 23S rRNA. The polypeptide is Large ribosomal subunit protein bL9 (Pseudomonas aeruginosa (strain LESB58)).